A 223-amino-acid polypeptide reads, in one-letter code: Endonuclease NucS (223 aa).

Belongs to the NucS endonuclease family.

The protein localises to the cytoplasm. Cleaves both 3' and 5' ssDNA extremities of branched DNA structures. The chain is Endonuclease NucS from Streptomyces avermitilis (strain ATCC 31267 / DSM 46492 / JCM 5070 / NBRC 14893 / NCIMB 12804 / NRRL 8165 / MA-4680).